The primary structure comprises 251 residues: Small ribosomal subunit protein uS2 (251 aa).

The interval 232 to 251 (LQTGEEEMAAAEGESEQVEA) is disordered. Residues 235–251 (GEEEMAAAEGESEQVEA) are compositionally biased toward acidic residues.

Belongs to the universal ribosomal protein uS2 family.

This chain is Small ribosomal subunit protein uS2, found in Geobacter metallireducens (strain ATCC 53774 / DSM 7210 / GS-15).